A 504-amino-acid chain; its full sequence is Glucosaminyl-phosphatidylinositol-acyltransferase PIGW (504 aa).

The Lumenal portion of the chain corresponds to 1–21 (MSEKQMKEAFVSNLNGTTVLE). Residue Asn-15 is glycosylated (N-linked (GlcNAc...) asparagine). A helical transmembrane segment spans residues 22 to 42 (ITQGLCFPAFCILCRGFLIIF). The Cytoplasmic portion of the chain corresponds to 43–56 (SQYLCSFSPTWKTR). The chain crosses the membrane as a helical span at residues 57–75 (FLTDFVVLIVPMVATLTIW). Topologically, residues 76–81 (ASFILL) are lumenal. A helical transmembrane segment spans residues 82-98 (ELLGVIIFGAGLLYQIY). The Cytoplasmic portion of the chain corresponds to 99–131 (RRRTCYARLPFLKILEKFLNISLESEYNPAISC). A helical transmembrane segment spans residues 132 to 152 (FRVITSAFTAIAILAVDFPLF). Topologically, residues 153-162 (PRRFAKTELY) are lumenal. A helical membrane pass occupies residues 163–183 (GTGAMDFGVGGFVFGSAMVCL). Over 184-202 (EVRRRKYMEGSKLHYFTNS) the chain is Cytoplasmic. Residues 203-223 (LYSVWPLVFLGIGRLAIIKSI) traverse the membrane as a helical segment. Over 224–237 (GYQEHLTEYGVHWN) the chain is Lumenal. Residues 238-258 (FFFTIIVVKLITPLLLIIFPL) form a helical membrane-spanning segment. Over 259–260 (NK) the chain is Cytoplasmic. Residues 261 to 281 (SWIIALGITVLYQLALDFTSL) traverse the membrane as a helical segment. Residues 282-305 (KRLILYGTDGSGTRVGLLNANREG) are Lumenal-facing. The helical transmembrane segment at 306 to 326 (IISTLGYVAIHMAGVQTGLYM) threads the bilayer. The Cytoplasmic portion of the chain corresponds to 327–338 (HKNRSHIKDLIK). Residues 339–359 (VACFLLLAAISLFISLYVVQV) traverse the membrane as a helical segment. Over 360–370 (NVEAVSRRMAN) the chain is Lumenal. Residues 371-391 (LAFCIWIVASSLILLSSLLLG) form a helical membrane-spanning segment. The Cytoplasmic segment spans residues 392–448 (DIILSFAKFLIKGALVPCSWKLIQSPVTNKKHSESLVPEAERMEPSLCLITALNRKQ). Phosphoserine is present on Ser-416. Residues 449 to 469 (LIFFLLSNITTGLINLMVDTL) form a helical membrane-spanning segment. At 470-473 (HSST) the chain is on the lumenal side. A helical transmembrane segment spans residues 474 to 494 (LWALFVVNLYMFSNCLIVYVL). Residues 495–504 (YLQDKTVQFW) lie on the Cytoplasmic side of the membrane.

Belongs to the PIGW family.

Its subcellular location is the endoplasmic reticulum membrane. The protein operates within glycolipid biosynthesis; glycosylphosphatidylinositol-anchor biosynthesis. Functionally, acyltransferase that catalyzes the acyl transfer from an acyl-CoA at the 2-OH position of the inositol ring of glucosaminyl phosphatidylinositol (GlcN-PI) to generate glucosaminyl acyl phosphatidylinositol (GlcN-(acyl)PI) and participates in the fourth step of GPI-anchor biosynthesis. Required for the transport of GPI-anchored proteins to the plasma membrane. Acetylation during GPI-anchor biosynthesis is not essential for the subsequent mannosylation and is usually removed soon after the attachment of GPIs to proteins. The sequence is that of Glucosaminyl-phosphatidylinositol-acyltransferase PIGW from Homo sapiens (Human).